The chain runs to 252 residues: Trans-aconitate 2-methyltransferase (252 aa).

The protein belongs to the methyltransferase superfamily. Tam family.

The protein localises to the cytoplasm. It carries out the reaction trans-aconitate + S-adenosyl-L-methionine = (E)-3-(methoxycarbonyl)pent-2-enedioate + S-adenosyl-L-homocysteine. Functionally, catalyzes the S-adenosylmethionine monomethyl esterification of trans-aconitate. In Shigella flexneri, this protein is Trans-aconitate 2-methyltransferase.